The sequence spans 377 residues: Putative glutamate--cysteine ligase 2 (377 aa).

This sequence belongs to the glutamate--cysteine ligase type 2 family. YbdK subfamily.

It carries out the reaction L-cysteine + L-glutamate + ATP = gamma-L-glutamyl-L-cysteine + ADP + phosphate + H(+). Functionally, ATP-dependent carboxylate-amine ligase which exhibits weak glutamate--cysteine ligase activity. The sequence is that of Putative glutamate--cysteine ligase 2 from Pseudomonas aeruginosa (strain ATCC 15692 / DSM 22644 / CIP 104116 / JCM 14847 / LMG 12228 / 1C / PRS 101 / PAO1).